A 283-amino-acid polypeptide reads, in one-letter code: Thymidylate synthase (283 aa).

Arginine 22 is a dUMP binding site. The active-site Nucleophile is cysteine 160. DUMP is bound by residues 180-183, asparagine 191, and 221-223; these read RSCD and HIY. Aspartate 183 contacts (6R)-5,10-methylene-5,6,7,8-tetrahydrofolate. Residue serine 282 participates in (6R)-5,10-methylene-5,6,7,8-tetrahydrofolate binding.

It belongs to the thymidylate synthase family. Bacterial-type ThyA subfamily. Homodimer.

It is found in the cytoplasm. The enzyme catalyses dUMP + (6R)-5,10-methylene-5,6,7,8-tetrahydrofolate = 7,8-dihydrofolate + dTMP. It functions in the pathway pyrimidine metabolism; dTTP biosynthesis. Catalyzes the reductive methylation of 2'-deoxyuridine-5'-monophosphate (dUMP) to 2'-deoxythymidine-5'-monophosphate (dTMP) while utilizing 5,10-methylenetetrahydrofolate (mTHF) as the methyl donor and reductant in the reaction, yielding dihydrofolate (DHF) as a by-product. This enzymatic reaction provides an intracellular de novo source of dTMP, an essential precursor for DNA biosynthesis. This chain is Thymidylate synthase, found in Haemophilus influenzae (strain ATCC 51907 / DSM 11121 / KW20 / Rd).